The following is a 492-amino-acid chain: Phosphoenolpyruvate carboxylase (492 aa).

Belongs to the PEPCase type 2 family. In terms of assembly, homotetramer. The cofactor is Mg(2+).

It carries out the reaction oxaloacetate + phosphate = phosphoenolpyruvate + hydrogencarbonate. In terms of biological role, catalyzes the irreversible beta-carboxylation of phosphoenolpyruvate (PEP) to form oxaloacetate (OAA), a four-carbon dicarboxylic acid source for the tricarboxylic acid cycle. The protein is Phosphoenolpyruvate carboxylase of Halobacterium salinarum (strain ATCC 29341 / DSM 671 / R1).